The chain runs to 391 residues: Ferrochelatase (391 aa).

2 residues coordinate Fe cation: His-196 and Glu-281.

The protein belongs to the ferrochelatase family.

The protein resides in the cytoplasm. It carries out the reaction heme b + 2 H(+) = protoporphyrin IX + Fe(2+). It participates in porphyrin-containing compound metabolism; protoheme biosynthesis; protoheme from protoporphyrin-IX: step 1/1. Functionally, catalyzes the ferrous insertion into protoporphyrin IX. The chain is Ferrochelatase from Prochlorococcus marinus (strain MIT 9215).